We begin with the raw amino-acid sequence, 395 residues long: MTTPFKRVHLIVMDSVGIGEAPDAAAFNDEGSHTLKHTLEGFNQTLPNLEKLGLGNIEELPVVNKVEQPGAFYTKLSEASVGKDTMTGHWEIMGLNIMQPFKVYPNGFPDELIQEIEEMTGRKVVANKPASGTAIIDELGEHQMKTGDLIVYTSADPVLQIAAHEDIIPLEELYDICEKVRELTKDPKYLIGRVIARPYVGEPGNFTRTSNRHDYALKPFGKTVMNTLKDNNYDVIAIGKINDIYDGEGVTEAIRTKNNMDGMDQLINVVKKDFNGISFLNLVDFDALYGHRRDKEGYAQAIKDFDERLPELIDNLQEDDLVIITADHGNDPIADGTDHTREYIPVLMFSPKIDKYHELSGDSTFSSIGATIADNFNVELPEFGKSYLNEMGVEH.

Aspartate 14, aspartate 286, histidine 291, aspartate 327, histidine 328, and histidine 339 together coordinate Mn(2+).

The protein belongs to the phosphopentomutase family. Mn(2+) serves as cofactor.

It is found in the cytoplasm. It carries out the reaction 2-deoxy-alpha-D-ribose 1-phosphate = 2-deoxy-D-ribose 5-phosphate. The enzyme catalyses alpha-D-ribose 1-phosphate = D-ribose 5-phosphate. The protein operates within carbohydrate degradation; 2-deoxy-D-ribose 1-phosphate degradation; D-glyceraldehyde 3-phosphate and acetaldehyde from 2-deoxy-alpha-D-ribose 1-phosphate: step 1/2. Functionally, isomerase that catalyzes the conversion of deoxy-ribose 1-phosphate (dRib-1-P) and ribose 1-phosphate (Rib-1-P) to deoxy-ribose 5-phosphate (dRib-5-P) and ribose 5-phosphate (Rib-5-P), respectively. In Staphylococcus haemolyticus (strain JCSC1435), this protein is Phosphopentomutase.